The sequence spans 405 residues: Dihydrolipoyllysine-residue succinyltransferase component of 2-oxoglutarate dehydrogenase complex (405 aa).

The Lipoyl-binding domain maps to 3–78 (SVDILVPDLP…TSRQILGRLR (76 aa)). Lysine 44 is modified (N6-lipoyllysine). The interval 75 to 111 (GRLREGNSAGKETSAKSEEKASTPAQRQQASLEEQNN) is disordered. Residues 97–111 (TPAQRQQASLEEQNN) are compositionally biased toward polar residues. One can recognise a Peripheral subunit-binding (PSBD) domain in the interval 113 to 150 (ALSPAIRRLLAEHNLDASAIKGTGVGGRLTREDVEKHL). Position 148 is an N6-acetyllysine (lysine 148). A compositionally biased stretch (low complexity) spans 153 to 173 (APAKESAPAAAAPAAQPALAA). The interval 153-178 (APAKESAPAAAAPAAQPALAARSEKR) is disordered. Residues histidine 376 and aspartate 380 contribute to the active site.

It belongs to the 2-oxoacid dehydrogenase family. As to quaternary structure, forms a 24-polypeptide structural core with octahedral symmetry. Part of the 2-oxoglutarate dehydrogenase (OGDH) complex composed of E1 (2-oxoglutarate dehydrogenase), E2 (dihydrolipoamide succinyltransferase) and E3 (dihydrolipoamide dehydrogenase); the complex contains multiple copies of the three enzymatic components (E1, E2 and E3). Interacts with SucA (via N-terminus), the E1 component of OGDH complex. The cofactor is (R)-lipoate.

The catalysed reaction is N(6)-[(R)-dihydrolipoyl]-L-lysyl-[protein] + succinyl-CoA = N(6)-[(R)-S(8)-succinyldihydrolipoyl]-L-lysyl-[protein] + CoA. It participates in amino-acid degradation; L-lysine degradation via saccharopine pathway; glutaryl-CoA from L-lysine: step 6/6. Functionally, E2 component of the 2-oxoglutarate dehydrogenase (OGDH) complex which catalyzes the second step in the conversion of 2-oxoglutarate to succinyl-CoA and CO(2). The polypeptide is Dihydrolipoyllysine-residue succinyltransferase component of 2-oxoglutarate dehydrogenase complex (sucB) (Escherichia coli O157:H7).